The sequence spans 286 residues: Type II restriction enzyme NgoMIV (286 aa).

Mg(2+) is bound by residues D140 and C186.

As to quaternary structure, homotetramer. It depends on Mg(2+) as a cofactor.

The catalysed reaction is Endonucleolytic cleavage of DNA to give specific double-stranded fragments with terminal 5'-phosphates.. A P subtype restriction enzyme that recognizes the double-stranded sequence 5'-GCCGGC-3' and cleaves after G-1. This is Type II restriction enzyme NgoMIV (ngoMIVR) from Neisseria gonorrhoeae.